The primary structure comprises 155 residues: Troponin C, body wall muscle (155 aa).

N-acetylvaline is present on Val-1. EF-hand domains are found at residues 7 to 43 (DEKSQFRAAFDIFVADAKDGTISSKELGKVMKMLGQN), 44 to 79 (PTEKDLQEMIEEVDIDGSGTIDFEEFCLMMYRQMQA), 88 to 121 (REEKELSEAFRLFDLDGDGIGDELKAALDGTGEN), and 122 to 155 (VETWEVDEMMADGDKNHDSQIDYEEWVTMMKFVQ). Ca(2+) is bound by residues Asp-57, Asp-59, Ser-61, Thr-63, and Glu-68. Ca(2+)-binding residues include Asp-135, Asn-137, Asp-139, Gln-141, and Glu-146.

Belongs to the troponin C family.

In terms of biological role, troponin is the central regulatory protein of muscle contraction. Tn consists of three components: Tn-I which is the inhibitor of actomyosin ATPase, Tn-T which contains the binding site for tropomyosin and Tn-C. The binding of calcium to Tn-C abolishes the inhibitory action of Tn on actin filaments. The protein is Troponin C, body wall muscle of Halocynthia roretzi (Sea squirt).